The sequence spans 221 residues: Imidazole glycerol phosphate synthase subunit HisH (221 aa).

In terms of domain architecture, Glutamine amidotransferase type-1 spans 9–221 (DVVIIDTGCA…QILGNFLKMQ (213 aa)). The Nucleophile role is filled by Cys84. Active-site residues include His202 and Glu204.

Heterodimer of HisH and HisF.

Its subcellular location is the cytoplasm. The catalysed reaction is 5-[(5-phospho-1-deoxy-D-ribulos-1-ylimino)methylamino]-1-(5-phospho-beta-D-ribosyl)imidazole-4-carboxamide + L-glutamine = D-erythro-1-(imidazol-4-yl)glycerol 3-phosphate + 5-amino-1-(5-phospho-beta-D-ribosyl)imidazole-4-carboxamide + L-glutamate + H(+). It carries out the reaction L-glutamine + H2O = L-glutamate + NH4(+). It functions in the pathway amino-acid biosynthesis; L-histidine biosynthesis; L-histidine from 5-phospho-alpha-D-ribose 1-diphosphate: step 5/9. In terms of biological role, IGPS catalyzes the conversion of PRFAR and glutamine to IGP, AICAR and glutamate. The HisH subunit catalyzes the hydrolysis of glutamine to glutamate and ammonia as part of the synthesis of IGP and AICAR. The resulting ammonia molecule is channeled to the active site of HisF. In Shewanella oneidensis (strain ATCC 700550 / JCM 31522 / CIP 106686 / LMG 19005 / NCIMB 14063 / MR-1), this protein is Imidazole glycerol phosphate synthase subunit HisH.